Here is a 498-residue protein sequence, read N- to C-terminus: Cytochrome P450 monooxygenase astB (498 aa).

Residues 7–27 (FTTMPVVLLVGLVLYQLLAFT) form a helical membrane-spanning segment. N-linked (GlcNAc...) asparagine glycosylation is found at N237, N248, and N346. Position 425 (C425) interacts with heme.

This sequence belongs to the cytochrome P450 family. Heme is required as a cofactor.

The protein localises to the membrane. It carries out the reaction preasperterpenoid A + 4 reduced [NADPH--hemoprotein reductase] + 4 O2 = asperterpenoid A + 4 oxidized [NADPH--hemoprotein reductase] + 5 H2O + 5 H(+). The catalysed reaction is asperterpenoid A + 2 reduced [NADPH--hemoprotein reductase] + 2 O2 = asperterpenoid B + 2 oxidized [NADPH--hemoprotein reductase] + 3 H2O + 3 H(+). Its pathway is secondary metabolite biosynthesis; terpenoid biosynthesis. Cytochrome P450 monooxygenase; part of the gene cluster that mediates the biosynthesis of the asperterpenoids, sesterterpenes that exhibit anti-tuberculosis activity. The first step of the pathway is performed by the sesterterpene synthase astC that possesses both prenyl transferase and terpene cyclase activity, converting isopentenyl diphosphate and dimethylallyl diphosphate into geranylfarnesyl diphosphate (GFPP) and further converting GFPP into preasperterpenoid A, respectively. The cytochrome P450 monooxygenase astB then dually oxidizes preasperterpenoid A to produce asperterpenoid A along with a minor product, asperterpenoid B. Finally, the cytochrome P450 monooxygenase astA converts asperterpenoid A into asperterpenoid C. The polypeptide is Cytochrome P450 monooxygenase astB (Talaromyces wortmannii (Penicillium wortmannii)).